Here is a 280-residue protein sequence, read N- to C-terminus: Eukaryotic translation initiation factor 3 subunit F-1 (280 aa).

The MPN domain maps to 8–138; that stretch reads VRVHPVVLFQ…LRAYVCIQLG (131 aa).

It belongs to the eIF-3 subunit F family. As to quaternary structure, component of the eukaryotic translation initiation factor 3 (eIF-3) complex. The eIF-3 complex interacts with pix.

It is found in the cytoplasm. Component of the eukaryotic translation initiation factor 3 (eIF-3) complex, which is involved in protein synthesis of a specialized repertoire of mRNAs and, together with other initiation factors, stimulates binding of mRNA and methionyl-tRNAi to the 40S ribosome. The eIF-3 complex specifically targets and initiates translation of a subset of mRNAs involved in cell proliferation. This is Eukaryotic translation initiation factor 3 subunit F-1 from Drosophila ananassae (Fruit fly).